Reading from the N-terminus, the 104-residue chain is uncharacterized protein (104 aa).

To M.jannaschii MJ1511.

This is an uncharacterized protein from Methanocaldococcus jannaschii (strain ATCC 43067 / DSM 2661 / JAL-1 / JCM 10045 / NBRC 100440) (Methanococcus jannaschii).